Consider the following 345-residue polypeptide: N-acetyl-gamma-glutamyl-phosphate reductase (345 aa).

The active site involves Cys149.

The protein belongs to the NAGSA dehydrogenase family. Type 1 subfamily.

Its subcellular location is the cytoplasm. The catalysed reaction is N-acetyl-L-glutamate 5-semialdehyde + phosphate + NADP(+) = N-acetyl-L-glutamyl 5-phosphate + NADPH + H(+). Its pathway is amino-acid biosynthesis; L-arginine biosynthesis; N(2)-acetyl-L-ornithine from L-glutamate: step 3/4. Its function is as follows. Catalyzes the NADPH-dependent reduction of N-acetyl-5-glutamyl phosphate to yield N-acetyl-L-glutamate 5-semialdehyde. In Bacillus thuringiensis subsp. konkukian (strain 97-27), this protein is N-acetyl-gamma-glutamyl-phosphate reductase.